A 2561-amino-acid chain; its full sequence is Plipastatin synthase subunit A (2561 aa).

The interval 1–1038 (MSEHTYSLTH…ATVIREGTDS (1038 aa)) is domain 1 (glutamate-activating). Residues 2 to 300 (SEHTYSLTHA…SSLPIRITVD (299 aa)) are condensation 1. The segment at 485-888 (TYAELDMYAS…SIEGVREAAV (404 aa)) is adenylation 1. In terms of domain architecture, Carrier 1 spans 961-1036 (APRNVTEMKL…GLATVIREGT (76 aa)). S996 bears the O-(pantetheine 4'-phosphoryl)serine mark. The tract at residues 1048–1338 (KQETYPVSSA…NTLALRTRPE (291 aa)) is condensation 2. The domain 2 (D-ornithine-activating) stretch occupies residues 1048–2554 (KQETYPVSSA…ELTLSALSSI (1507 aa)). Residues 1525-1932 (SYRLLNERAN…QTGLVREAAV (408 aa)) are adenylation 2. A Carrier 2 domain is found at 2007–2081 (APVNDLQKTM…ELCGHITPLA (75 aa)). S2042 carries the O-(pantetheine 4'-phosphoryl)serine modification. Positions 2089–2554 (AEGEAELTPI…ELTLSALSSI (466 aa)) are epimerization.

This sequence belongs to the ATP-dependent AMP-binding enzyme family. Requires pantetheine 4'-phosphate as cofactor.

Functionally, this protein is a multifunctional enzyme, able to activate and polymerize the amino acids Glu and Orn as part of the biosynthesis of the lipopeptide antibiotic lipastatin. The Orn residue is further epimerized to the D-isomer form. The activation sites for these amino acids consist of individual domains. This is Plipastatin synthase subunit A (ppsA) from Bacillus subtilis (strain 168).